We begin with the raw amino-acid sequence, 722 residues long: Glycine--tRNA ligase beta subunit (722 aa).

It belongs to the class-II aminoacyl-tRNA synthetase family. As to quaternary structure, tetramer of two alpha and two beta subunits.

The protein resides in the cytoplasm. It carries out the reaction tRNA(Gly) + glycine + ATP = glycyl-tRNA(Gly) + AMP + diphosphate. This chain is Glycine--tRNA ligase beta subunit, found in Xylella fastidiosa (strain M12).